A 384-amino-acid polypeptide reads, in one-letter code: Dual specificity protein phosphatase 5 (384 aa).

A Rhodanese domain is found at 19-141 (AAARCVVLDC…FYSEYPECCV (123 aa)). Residues 53-74 (RRARGGAVSARYVLPDEAARAR) carry the Nuclear localization signal motif. The Tyrosine-protein phosphatase domain maps to 178–319 (GPVEILPFLY…LLQYESEILP (142 aa)). Cys263 serves as the catalytic Phosphocysteine intermediate.

It belongs to the protein-tyrosine phosphatase family. Non-receptor class dual specificity subfamily.

It localises to the nucleus. It carries out the reaction O-phospho-L-tyrosyl-[protein] + H2O = L-tyrosyl-[protein] + phosphate. The catalysed reaction is O-phospho-L-seryl-[protein] + H2O = L-seryl-[protein] + phosphate. It catalyses the reaction O-phospho-L-threonyl-[protein] + H2O = L-threonyl-[protein] + phosphate. Functionally, dual specificity protein phosphatase; active with phosphotyrosine, phosphoserine and phosphothreonine residues. The highest relative activity is toward ERK1. The sequence is that of Dual specificity protein phosphatase 5 (DUSP5) from Homo sapiens (Human).